The sequence spans 505 residues: Probable inorganic carbon transporter subunit DabB (505 aa).

13 helical membrane-spanning segments follow: residues 9–29 (SLLT…LLFL), 37–57 (FVRI…LILA), 68–88 (WHLD…GFII), 105–123 (YFTL…WLSG), 162–182 (LFLL…HATG), 204–224 (TGIQ…WPFQ), 231–251 (IVAP…AGGI), 259–279 (LFHG…SVLI), 303–323 (GFML…HLIL), 355–375 (LWVM…WLTA), 382–402 (LISA…LVAF), 410–430 (IAGL…HHLF), and 446–466 (MSAV…GTWV).

Belongs to the inorganic carbon transporter (TC 9.A.2) DabB family. Forms a complex with DabA.

Its subcellular location is the cell membrane. Part of an energy-coupled inorganic carbon pump. The protein is Probable inorganic carbon transporter subunit DabB of Bacillus subtilis (strain 168).